The primary structure comprises 461 residues: MNESIFIKEFIKILIKCKLGNEEDWFIEIIDKVWIWADKFQIKIISRVNENKELIEPINKIWNDSLKQISSEINLNKICILNLQKEISFKYLLEFENIKEFILSLFLNNLLLTEYQLLICLNSFFNNNSNLSLNVINKIREISSKNSFNNLLKDFNLKFQESIFGVNFKTNINDNKNNNELFLFPSIHINENLESRAIAQLLLNNFLKIQTNKEKEEIDPETINVISNLYNNDTTVFLWILLILSFNINNNNNNNNNNNNNNNNNNNNNNNNNNYNNLIGEMLTLIEKSKLVKKVKFFLCSDNYLLMSVTKLNFNFFQLYQDALFSLIEYYLFNENSKEINIDSDYLNYLNSSLLSLLQLTSPILINQPSQPTSPPQNEINNNNNNNNNNNNNNNNNNNNNNNNNNNNNNNNNSITSIRHLVLNSINQRIFATKTLKTNEISKGNVLKMLIDLKNSNSIKK.

Disordered stretches follow at residues 254 to 273 (NNNN…NNNN) and 368 to 414 (QPSQ…NNNS). Low complexity predominate over residues 381 to 413 (NNNNNNNNNNNNNNNNNNNNNNNNNNNNNNNNN).

This is an uncharacterized protein from Dictyostelium discoideum (Social amoeba).